The primary structure comprises 342 residues: Arginase 1, mitochondrial (342 aa).

The transit peptide at 1–22 directs the protein to the mitochondrion; sequence MSRIIGRKGINYIHRLNSASFT. L-ornithine contacts are provided by residues S77 and 96–99; that span reads GSTN. 4 residues coordinate Mn(2+): H161, D185, H187, and D189. Position 189–191 (189–191) interacts with L-ornithine; that stretch reads DIY. Residue 195–197 participates in substrate binding; it reads EGN. S224 serves as a coordination point for L-ornithine. Mn(2+)-binding residues include D270 and D272. A substrate-binding site is contributed by E313.

The protein belongs to the arginase family. As to quaternary structure, forms homohexamers. Mn(2+) is required as a cofactor. As to expression, expressed in vasculature of roots, root tips, cotyledons, leaves, cauline leaves, stems, sepals and pollen.

Its subcellular location is the mitochondrion. It catalyses the reaction L-arginine + H2O = urea + L-ornithine. The enzyme catalyses agmatine + H2O = urea + putrescine. It participates in nitrogen metabolism; urea cycle; L-ornithine and urea from L-arginine: step 1/1. Its pathway is amine and polyamine biosynthesis; putrescine biosynthesis via agmatine pathway; putrescine from agmatine: step 1/1. In terms of biological role, catalyzes the hydrolysis of L-arginine to urea and L-ornithine. The latter can be utilized in the urea cycle or as a precursor for the synthesis of both polyamines and proline. Possesses agmatinase activity. Catalyzes the formation of putrescine from agmatine. This chain is Arginase 1, mitochondrial, found in Arabidopsis thaliana (Mouse-ear cress).